We begin with the raw amino-acid sequence, 551 residues long: Pentatricopeptide repeat-containing protein At3g13150 (551 aa).

The disordered stretch occupies residues 22-67 (ATAKSAKPRSQTKSTKFPSKLKASTASVGDGGQSSNDAKDSKNSKL). Residues 29 to 48 (PRSQTKSTKFPSKLKASTAS) show a composition bias toward polar residues. The span at 58 to 67 (DAKDSKNSKL) shows a compositional bias: basic and acidic residues. 7 PPR repeats span residues 121 to 155 (SEDF…NCER), 156 to 191 (TVKS…GITP), 192 to 226 (DLVT…GFEP), 227 to 261 (DLIS…NLSP), 262 to 296 (NIRS…GISP), 297 to 331 (DVHT…GLTP), and 332 to 366 (DTVT…KLLS). Disordered regions lie at residues 409–435 (GKKK…SPDT) and 449–551 (SSSD…LLDD). A compositionally biased stretch (low complexity) spans 415-435 (SSPVSSSAKTTSTPVSSSPDT).

Belongs to the PPR family. P subfamily.

The protein is Pentatricopeptide repeat-containing protein At3g13150 of Arabidopsis thaliana (Mouse-ear cress).